Here is a 712-residue protein sequence, read N- to C-terminus: Ribosomal RNA large subunit methyltransferase K/L (712 aa).

Positions 42-153 constitute a THUMP domain; the sequence is QALRIVMWSR…KGRASLSIDL (112 aa).

Belongs to the methyltransferase superfamily. RlmKL family.

The protein localises to the cytoplasm. It carries out the reaction guanosine(2445) in 23S rRNA + S-adenosyl-L-methionine = N(2)-methylguanosine(2445) in 23S rRNA + S-adenosyl-L-homocysteine + H(+). The enzyme catalyses guanosine(2069) in 23S rRNA + S-adenosyl-L-methionine = N(2)-methylguanosine(2069) in 23S rRNA + S-adenosyl-L-homocysteine + H(+). Its function is as follows. Specifically methylates the guanine in position 2445 (m2G2445) and the guanine in position 2069 (m7G2069) of 23S rRNA. The protein is Ribosomal RNA large subunit methyltransferase K/L of Stenotrophomonas maltophilia (strain K279a).